A 107-amino-acid chain; its full sequence is Small ribosomal subunit protein uS17 (107 aa).

This sequence belongs to the universal ribosomal protein uS17 family. Part of the 30S ribosomal subunit.

One of the primary rRNA binding proteins, it binds specifically to the 5'-end of 16S ribosomal RNA. This chain is Small ribosomal subunit protein uS17, found in Thermotoga sp. (strain RQ2).